Reading from the N-terminus, the 145-residue chain is uncharacterized protein (145 aa).

Positions 1-20 are cleaved as a signal peptide; the sequence is MKTCTVICCTALVLGLTAYA.

This is an uncharacterized protein from Aedes vexans (Inland floodwater mosquito).